Consider the following 463-residue polypeptide: Protein phosphatase PP2A regulatory subunit B (463 aa).

WD repeat units lie at residues Thr27–Glu66 and Glu87–Val128. Ser134 is modified (phosphoserine). WD repeat units lie at residues Ala174–Asn212, Glu223–Asn263, Glu282–Lys320, and Glu337–Arg378.

It belongs to the phosphatase 2A regulatory subunit B family. As to quaternary structure, PP2A exists in several trimeric forms, all of which consist of a core composed of a catalytic subunit associated with a 65 kDa (PR65) (Subunit A) and a 55 kDa (PR55) (Subunit B) regulatory subunit.

Phosphatase 2A affects a variety of biological processes in the cell such as transcription, cell cycle progression and cellular morphogenesis, and provides an initial identification of critical substrates for this phosphatase. The regulatory subunit may direct the catalytic subunit to distinct, albeit overlapping, subsets of substrates. This chain is Protein phosphatase PP2A regulatory subunit B (pab1), found in Schizosaccharomyces pombe (strain 972 / ATCC 24843) (Fission yeast).